Consider the following 161-residue polypeptide: Phosphopantetheine adenylyltransferase (161 aa).

Position 9 (Thr-9) interacts with substrate. ATP contacts are provided by residues 9-10 and His-17; that span reads TF. Substrate is bound by residues Lys-41, Leu-73, and Arg-87. ATP-binding positions include 88 to 90, Glu-98, and 123 to 129; these read GLR and YSFISST.

It belongs to the bacterial CoaD family. Homohexamer. Mg(2+) serves as cofactor.

Its subcellular location is the cytoplasm. The catalysed reaction is (R)-4'-phosphopantetheine + ATP + H(+) = 3'-dephospho-CoA + diphosphate. Its pathway is cofactor biosynthesis; coenzyme A biosynthesis; CoA from (R)-pantothenate: step 4/5. Its function is as follows. Reversibly transfers an adenylyl group from ATP to 4'-phosphopantetheine, yielding dephospho-CoA (dPCoA) and pyrophosphate. This Pseudomonas putida (strain ATCC 47054 / DSM 6125 / CFBP 8728 / NCIMB 11950 / KT2440) protein is Phosphopantetheine adenylyltransferase.